The primary structure comprises 299 residues: Biotin transporter (299 aa).

A run of 10 helical transmembrane segments spans residues A2 to L22, V26 to F46, T56 to F76, Y81 to I101, L110 to Y130, F137 to G157, A172 to G192, L202 to W222, T233 to W253, and Q256 to H276. 2 consecutive EamA domains span residues L3–I128 and V139–W274.

The protein belongs to the drug/metabolite transporter (DMT) superfamily. 10 TMS drug/metabolite exporter (DME) (TC 2.A.7.3) family.

The protein localises to the cell inner membrane. The catalysed reaction is biotin(in) = biotin(out). Its function is as follows. Uptake of biotin. In Salmonella typhi, this protein is Biotin transporter.